The sequence spans 417 residues: Actin-related protein 10 (417 aa).

It belongs to the actin family. As to quaternary structure, subunit of dynactin, a multiprotein complex part of a tripartite complex with dynein and a adapter, such as BICDL1, BICD2 or HOOK3. The dynactin complex is built around ACTR1A/ACTB filament and consists of an actin-related filament composed of a shoulder domain, a pointed end and a barbed end. Its length is defined by its flexible shoulder domain. The soulder is composed of 2 DCTN1 subunits, 4 DCTN2 and 2 DCTN3. The 4 DCNT2 (via N-terminus) bind the ACTR1A filament and act as molecular rulers to determine the length. The pointed end is important for binding dynein-dynactin cargo adapters. Consists of 4 subunits: ACTR10, DCNT4, DCTN5 and DCTN6. The barbed end is composed of a CAPZA1:CAPZB heterodimers, which binds ACTR1A/ACTB filament and dynactin and stabilizes dynactin.

The protein resides in the cytoplasm. It localises to the cytoskeleton. Part of the dynactin complex that activates the molecular motor dynein for ultra-processive transport along microtubules. The protein is Actin-related protein 10 (Actr10) of Mus musculus (Mouse).